Here is a 506-residue protein sequence, read N- to C-terminus: Cytochrome P450 71B8 (506 aa).

The chain crosses the membrane as a helical span at residues 5–25 (ILLCFFFLFPLLLTLFKKLLP). Residue cysteine 443 coordinates heme.

It belongs to the cytochrome P450 family. The cofactor is heme.

It localises to the membrane. The sequence is that of Cytochrome P450 71B8 (CYP71B8) from Arabidopsis thaliana (Mouse-ear cress).